Reading from the N-terminus, the 218-residue chain is Thiamine-phosphate synthase (218 aa).

4-amino-2-methyl-5-(diphosphooxymethyl)pyrimidine is bound by residues 43-47 (QFRDK) and asparagine 78. Positions 79 and 98 each coordinate Mg(2+). Serine 117 serves as a coordination point for 4-amino-2-methyl-5-(diphosphooxymethyl)pyrimidine. Residue 143–145 (TNS) coordinates 2-[(2R,5Z)-2-carboxy-4-methylthiazol-5(2H)-ylidene]ethyl phosphate. Lysine 146 provides a ligand contact to 4-amino-2-methyl-5-(diphosphooxymethyl)pyrimidine. Residues glycine 174 and 194-195 (IS) each bind 2-[(2R,5Z)-2-carboxy-4-methylthiazol-5(2H)-ylidene]ethyl phosphate.

Belongs to the thiamine-phosphate synthase family. Mg(2+) is required as a cofactor.

It catalyses the reaction 2-[(2R,5Z)-2-carboxy-4-methylthiazol-5(2H)-ylidene]ethyl phosphate + 4-amino-2-methyl-5-(diphosphooxymethyl)pyrimidine + 2 H(+) = thiamine phosphate + CO2 + diphosphate. It carries out the reaction 2-(2-carboxy-4-methylthiazol-5-yl)ethyl phosphate + 4-amino-2-methyl-5-(diphosphooxymethyl)pyrimidine + 2 H(+) = thiamine phosphate + CO2 + diphosphate. The enzyme catalyses 4-methyl-5-(2-phosphooxyethyl)-thiazole + 4-amino-2-methyl-5-(diphosphooxymethyl)pyrimidine + H(+) = thiamine phosphate + diphosphate. The protein operates within cofactor biosynthesis; thiamine diphosphate biosynthesis; thiamine phosphate from 4-amino-2-methyl-5-diphosphomethylpyrimidine and 4-methyl-5-(2-phosphoethyl)-thiazole: step 1/1. Its function is as follows. Condenses 4-methyl-5-(beta-hydroxyethyl)thiazole monophosphate (THZ-P) and 2-methyl-4-amino-5-hydroxymethyl pyrimidine pyrophosphate (HMP-PP) to form thiamine monophosphate (TMP). In Lactococcus lactis subsp. cremoris (strain SK11), this protein is Thiamine-phosphate synthase.